The primary structure comprises 119 residues: UPF0102 protein Nther_1376 (119 aa).

Belongs to the UPF0102 family.

The protein is UPF0102 protein Nther_1376 of Natranaerobius thermophilus (strain ATCC BAA-1301 / DSM 18059 / JW/NM-WN-LF).